The chain runs to 268 residues: LOB domain-containing protein 13 (268 aa).

In terms of domain architecture, LOB spans 51 to 152; that stretch reads TPCAACKLLR…SELTTVRTEI (102 aa). Positions 191 to 268 are disordered; that stretch reads LLPPPPPPPP…SSDNNVHYFD (78 aa). Pro residues-rich tracts occupy residues 192 to 205 and 212 to 222; these read LPPP…PRPP and PAPPPTPPVSL. Positions 223-243 are enriched in low complexity; it reads PSPSMVVSSSSSSNSSATNSM. Positions 250-268 are enriched in polar residues; it reads STAGYSNSLSSDNNVHYFD.

It belongs to the LOB domain-containing protein family. Expressed in shoots and roots and at low levels in flowers, but not in leaves or inflorescence stems.

This chain is LOB domain-containing protein 13 (LBD13), found in Arabidopsis thaliana (Mouse-ear cress).